The following is a 661-amino-acid chain: CD180 antigen (661 aa).

Positions 1 to 20 are cleaved as a signal peptide; the sequence is MAPDISCFFLVALFLASCRA. The Extracellular portion of the chain corresponds to 21-626; sequence TTSSDQKCIE…RLSDVTLSCS (606 aa). Residues 33–53 form the LRRNT domain; it reads VNKTYNCENLGLNEIPGTLPN. 4 N-linked (GlcNAc...) asparagine glycosylation sites follow: asparagine 34, asparagine 53, asparagine 70, and asparagine 78. LRR repeat units lie at residues 54 to 75, 78 to 99, 102 to 123, 126 to 147, 150 to 171, 174 to 195, and 201 to 221; these read STECLEFSFNVLPTIQNTTFSR, NLTFLDLTRCQIYWIHEDTFQS, RLDTLVLTANPLIFMAETALSG, ALKHLFFIQTGISSIDFIPLHN, TLESLYLGSNHISSIKLPKGFP, KLKVLDFQNNAIHYLSKEDMSS, and NLSLNLNGNDIAGIELGAFDS. Residues asparagine 201, asparagine 244, and asparagine 288 are each glycosylated (N-linked (GlcNAc...) asparagine). 5 LRR repeats span residues 275–296, 299–321, 322–343, 346–366, and 371–391; these read SVESINLQKHYFFNISSNTFHC, GLQELDLTATHLSELPSGLVGLS, TLKKLVLSANKFENLCQISASN, SLTHLSIKGNTKRLELGTGCL, and NLRELDLSHDDIETSDCCNLQ. 2 N-linked (GlcNAc...) asparagine glycosylation sites follow: asparagine 394 and asparagine 402. 7 LRR repeats span residues 397 to 418, 421 to 442, 446 to 466, 470 to 493, 497 to 518, 521 to 544, and 546 to 566; these read HLQSLNLSYNEPLSLKTEAFKE, QLELLDLAFTRLKVKDAQSPFQ, LLKVLNLSHSLLDISSEQLFD, ALQHLNLQGNHFPKGNIQKTNSLQ, RLEILVLSFCDLSSIDQHAFTS, MMNHVDLSHNRLTSSSIEALSHLK, and IYLNLASNRISIILPSLLPIL. A glycan (N-linked (GlcNAc...) asparagine) is linked at asparagine 451. Residues 577–627 form the LRRCT domain; it reads NPLDCTCSNIYFLEWYKENMQKLEDTEDTLCENPPLLRGVRLSDVTLSCSM. The chain crosses the membrane as a helical span at residues 627 to 650; that stretch reads MAAVGIFFLIVFLLVFAILLIFAV. Over 651–661 the chain is Cytoplasmic; sequence KYFLRWKYQHI.

The protein belongs to the Toll-like receptor family. In terms of assembly, M-shaped tetramer of two CD180-LY86 heterodimers. As to expression, B-lymphocytes and spleen. Not detected in thymus, kidney, muscle, heart, brain or liver.

It localises to the cell membrane. May cooperate with MD-1 and TLR4 to mediate the innate immune response to bacterial lipopolysaccharide (LPS) in B-cells. Leads to NF-kappa-B activation. Also involved in the life/death decision of B-cells. The chain is CD180 antigen (Cd180) from Mus musculus (Mouse).